Reading from the N-terminus, the 239-residue chain is MNRPSGRAADQLRPIRITRHYTKHAEGSVLVEFGDTKVICTVSAESGVPRFLKGQGQGWLTAEYGMLPRSTGERNQREASRGKQGGRTLEIQRLIGRSLRAALDLSKLGENTLYIDCDVIQADGGTRTASITGATVALIDALAVLKKRGALKGNPLKQMVAAVSVGIYQGVPVLDLDYLEDSAAETDLNVVMTDSGGFIEVQGTAEGAPFRPAELNAMLELAQQGMQELFELQRAALAE.

Residues Arg87 and Gly125 to Arg127 contribute to the phosphate site.

It belongs to the RNase PH family. As to quaternary structure, homohexameric ring arranged as a trimer of dimers.

The catalysed reaction is tRNA(n+1) + phosphate = tRNA(n) + a ribonucleoside 5'-diphosphate. Its function is as follows. Phosphorolytic 3'-5' exoribonuclease that plays an important role in tRNA 3'-end maturation. Removes nucleotide residues following the 3'-CCA terminus of tRNAs; can also add nucleotides to the ends of RNA molecules by using nucleoside diphosphates as substrates, but this may not be physiologically important. Probably plays a role in initiation of 16S rRNA degradation (leading to ribosome degradation) during starvation. The polypeptide is Ribonuclease PH (Pseudomonas paraeruginosa (strain DSM 24068 / PA7) (Pseudomonas aeruginosa (strain PA7))).